The primary structure comprises 555 residues: CTP synthase (555 aa).

Residues 1 to 265 (MTRYIFITGG…GNRVCEKLNI (265 aa)) are amidoligase domain. Residue serine 13 participates in CTP binding. Serine 13 lines the UTP pocket. ATP is bound by residues 14-19 (SLGKGI) and aspartate 71. 2 residues coordinate Mg(2+): aspartate 71 and glutamate 139. Residues 146 to 148 (DIE), 186 to 191 (KTKPTQ), and lysine 222 each bind CTP. Residues 186-191 (KTKPTQ) and lysine 222 each bind UTP. The 252-residue stretch at 290 to 541 (TVAVVGKYVD…IKAGLAAKEA (252 aa)) folds into the Glutamine amidotransferase type-1 domain. Residue glycine 351 coordinates L-glutamine. Cysteine 378 functions as the Nucleophile; for glutamine hydrolysis in the catalytic mechanism. L-glutamine is bound by residues 379–382 (LGMQ), glutamate 402, and arginine 469. Catalysis depends on residues histidine 514 and glutamate 516.

Belongs to the CTP synthase family. As to quaternary structure, homotetramer.

It catalyses the reaction UTP + L-glutamine + ATP + H2O = CTP + L-glutamate + ADP + phosphate + 2 H(+). It carries out the reaction L-glutamine + H2O = L-glutamate + NH4(+). The enzyme catalyses UTP + NH4(+) + ATP = CTP + ADP + phosphate + 2 H(+). Its pathway is pyrimidine metabolism; CTP biosynthesis via de novo pathway; CTP from UDP: step 2/2. Allosterically activated by GTP, when glutamine is the substrate; GTP has no effect on the reaction when ammonia is the substrate. The allosteric effector GTP functions by stabilizing the protein conformation that binds the tetrahedral intermediate(s) formed during glutamine hydrolysis. Inhibited by the product CTP, via allosteric rather than competitive inhibition. Its function is as follows. Catalyzes the ATP-dependent amination of UTP to CTP with either L-glutamine or ammonia as the source of nitrogen. Regulates intracellular CTP levels through interactions with the four ribonucleotide triphosphates. This is CTP synthase from Coxiella burnetii (strain Dugway 5J108-111).